The sequence spans 130 residues: Small ribosomal subunit protein uS11 (130 aa).

This sequence belongs to the universal ribosomal protein uS11 family. In terms of assembly, part of the 30S ribosomal subunit. Interacts with proteins S7 and S18. Binds to IF-3.

In terms of biological role, located on the platform of the 30S subunit, it bridges several disparate RNA helices of the 16S rRNA. Forms part of the Shine-Dalgarno cleft in the 70S ribosome. The polypeptide is Small ribosomal subunit protein uS11 (Ruegeria pomeroyi (strain ATCC 700808 / DSM 15171 / DSS-3) (Silicibacter pomeroyi)).